The following is a 451-amino-acid chain: Plasmepsin III (451 aa).

At 1–37 (MNLTIKEEDFTNTFMKNEESFNTFRVTKVKRWNAKRL) the chain is on the cytoplasmic side. The propeptide occupies 1–123 (MNLTIKEEDF…KGLTKKSYLG (123 aa)). The helical; Signal-anchor for type II membrane protein transmembrane segment at 38–58 (FKILFVTVFIVLAGGFSYYIF) threads the bilayer. The Lumenal segment spans residues 59–451 (ENFVFQKNRK…TVGFALAKNL (393 aa)). Residues 139-446 (SFGEAKLGDN…DYDNHTVGFA (308 aa)) enclose the Peptidase A1 domain. Cystine bridges form between Cys170–Cys175 and Cys372–Cys408.

This sequence belongs to the peptidase A1 family. In terms of assembly, probable homodimer; in the zymogen form. Monomer; in the active form. Acidification disrupts homodimerization. Component of the hemozoin formation complex (HFC) composed of falcipains FP2A and/or FP2B, plasmepsins PMII, PMIII/HAP and PMIV, heme detoxifying protein HDP and falcilysin FLN. The HFC complex is involved in hemoglobin degradation and detoxification of heme in the food vacuole during the asexual blood stage. Proteolytically cleaved into the soluble active mature form by cysteine proteases in the digestive vacuole of trophozoites. Proteolysis requires an acidic environment. Transprocessing may serve as an alternate activation system.

The protein localises to the membrane. It localises to the vacuole lumen. It carries out the reaction Hydrolysis of the bonds linking certain hydrophobic residues in hemoglobin or globin. Also cleaves small molecules substrates such as Ala-Leu-Glu-Arg-Thr-Phe-|-Phe(NO2)-Ser-Phe-Pro-Thr.. Dimerization causes loss of catalytic activity. Inhibited by pepstatin A. Inhibited by Zn(2+). Functionally, during the asexual blood stage, catalyzes the cleavage of denatured host hemoglobin (Hb) or globins. Digestion of host Hb is an essential step which provides the parasite with amino acids for protein synthesis, and regulates osmolarity. In Plasmodium falciparum (isolate 3D7), this protein is Plasmepsin III.